We begin with the raw amino-acid sequence, 606 residues long: Neutral/alkaline invertase 3, chloroplastic (606 aa).

Residues 1 to 58 (MGIAEVALHSMPGAFAAHSPASNLPLAADAARGRRRRSANSLHSSRALQGPVRFPGLR) constitute a chloroplast transit peptide. The tract at residues 97-126 (RVPGQAVGGNGSVNGSAAKPPPQRRKASSV) is disordered.

It belongs to the glycosyl hydrolase 100 family.

The protein localises to the plastid. Its subcellular location is the chloroplast. The catalysed reaction is Hydrolysis of terminal non-reducing beta-D-fructofuranoside residues in beta-D-fructofuranosides.. Its function is as follows. Mitochondrial invertase that cleaves sucrose into glucose and fructose. In Oryza sativa subsp. japonica (Rice), this protein is Neutral/alkaline invertase 3, chloroplastic.